The primary structure comprises 269 residues: Transmembrane protein 41B (269 aa).

The next 6 membrane-spanning stretches (helical) occupy residues 30–50 (TSLLILVSIFTIAAFLMFLVY), 87–107 (FYVQVLVAYFATYVFLQTFAI), 125–147 (LALFLVCLCSGLGASFCYMLSYL), 175–195 (LINYIIFLRITPFLPNWFINI), 203–223 (PLKVFFIGTFLGVAPPSFVAI), and 240–260 (SWNSLFVLMILAILSILPALF). The tract at residues 118-229 (GFLYPFPLAL…FVAIKAGTTL (112 aa)) is VTT domain; required for its function in autophagy.

Belongs to the TMEM41 family.

Its subcellular location is the endoplasmic reticulum membrane. The protein localises to the endomembrane system. The enzyme catalyses a 1,2-diacyl-sn-glycero-3-phospho-L-serine(in) = a 1,2-diacyl-sn-glycero-3-phospho-L-serine(out). It catalyses the reaction cholesterol(in) = cholesterol(out). The catalysed reaction is a 1,2-diacyl-sn-glycero-3-phosphocholine(in) = a 1,2-diacyl-sn-glycero-3-phosphocholine(out). It carries out the reaction a 1,2-diacyl-sn-glycero-3-phosphoethanolamine(in) = a 1,2-diacyl-sn-glycero-3-phosphoethanolamine(out). Functionally, phospholipid scramblase involved in lipid homeostasis and membrane dynamics processes. Has phospholipid scramblase activity toward cholesterol and phosphatidylserine, as well as phosphatidylethanolamine and phosphatidylcholine. Required for autophagosome formation: participates in early stages of autophagosome biogenesis at the endoplasmic reticulum (ER) membrane by reequilibrating the leaflets of the ER as lipids are extracted by ATG2 (ATG2A or ATG2B) to mediate autophagosome assembly. In addition to autophagy, involved in other processes in which phospholipid scramblase activity is required. Required for normal motor neuron development. The sequence is that of Transmembrane protein 41B from Gallus gallus (Chicken).